Reading from the N-terminus, the 181-residue chain is ADP-ribosylation factor 1 (181 aa).

The N-myristoyl glycine moiety is linked to residue G2. Residues 3–16 (NMFANLFKGLFGKK) form an important for the stable binding to the membranes region. GTP contacts are provided by residues 24 to 32 (GLDAAGKTT), 126 to 129 (NKQD), and A160.

Belongs to the small GTPase superfamily. Arf family.

The protein resides in the golgi apparatus membrane. The enzyme catalyses GTP + H2O = GDP + phosphate + H(+). Its activity is regulated as follows. Alternates between an inactive GDP-bound form and an active GTP-bound form. Activated by a guanine nucleotide-exchange factor (GEF) and inactivated by GTPase-activating protein (GAP). Its function is as follows. Small GTPase involved in protein trafficking between different compartments. Modulates vesicle budding and uncoating within the Golgi complex. In its GTP-bound form, triggers the recruitment of coatomer proteins to the Golgi membrane. The hydrolysis of ARF1-bound GTP, which is mediated by ARFGAPs proteins, is required for dissociation of coat proteins from Golgi membranes and vesicles. The protein is ADP-ribosylation factor 1 (arf1) of Xenopus laevis (African clawed frog).